Consider the following 215-residue polypeptide: Sperm acrosome membrane-associated protein 3 (215 aa).

Residues 1 to 63 (MVSALRGAPL…EARSRALRRR (63 aa)) are Cytoplasmic-facing. The chain crosses the membrane as a helical; Signal-anchor for type II membrane protein span at residues 64–84 (WCPAGIMLLALVCLLSCLLPS). Residues 85–215 (SEAKLYGRCE…LTEWVDGCDF (131 aa)) lie on the Extracellular side of the membrane. The region spanning 88-215 (KLYGRCELAR…LTEWVDGCDF (128 aa)) is the C-type lysozyme domain. Intrachain disulfides connect Cys-93/Cys-213, Cys-117/Cys-201, Cys-151/Cys-166, and Cys-162/Cys-180.

Belongs to the glycosyl hydrolase 22 family. As to quaternary structure, interacts with ASTL. Post-translationally, the processed form derives from the membrane form by proteolytic processing. As to expression, the processed form is expressed in sperm (at protein level). Expressed in testis, epididymis and placenta.

The protein localises to the cytoplasmic vesicle. It is found in the secretory vesicle. The protein resides in the acrosome membrane. Its subcellular location is the secreted. Functionally, sperm surface membrane protein that may be involved in sperm-egg plasma membrane adhesion and fusion during fertilization. It could be a potential receptor for the egg oligosaccharide residue N-acetylglucosamine, which is present in the extracellular matrix over the egg plasma membrane. The processed form has no detectable bacteriolytic activity in vitro. In Homo sapiens (Human), this protein is Sperm acrosome membrane-associated protein 3 (SPACA3).